A 224-amino-acid chain; its full sequence is LexA repressor (224 aa).

A DNA-binding region (H-T-H motif) is located at residues 41-61 (MREIGDAVGLSSLSSVTHQLN). Active-site for autocatalytic cleavage activity residues include Ser-148 and Lys-185.

The protein belongs to the peptidase S24 family. As to quaternary structure, homodimer.

It catalyses the reaction Hydrolysis of Ala-|-Gly bond in repressor LexA.. Its function is as follows. Represses a number of genes involved in the response to DNA damage (SOS response), including recA and lexA. In the presence of single-stranded DNA, RecA interacts with LexA causing an autocatalytic cleavage which disrupts the DNA-binding part of LexA, leading to derepression of the SOS regulon and eventually DNA repair. The chain is LexA repressor from Leifsonia xyli subsp. xyli (strain CTCB07).